Here is a 469-residue protein sequence, read N- to C-terminus: UDP-glycosyltransferase 43 (469 aa).

UDP-alpha-D-glucose contacts are provided by residues serine 280, 345–346 (WV), 363–371 (HCGWNSILE), and 385–388 (YSEQ).

Belongs to the UDP-glycosyltransferase family.

With respect to regulation, inhibited by Cu(2+) or Zn(2+). In terms of biological role, glycosyltransferase that catalyzes the C-glucosylation of daidzein to puerarin. Shows activity with the isoflavones daidzein and genistein, but has no activity towards flavonoids such as 2-hydroxynaringenin. Can use UDP-glucose, but not UDP-galactose or UDP-glucuronic acid as sugar donor. Does not require bivalent cations for activity. The chain is UDP-glycosyltransferase 43 from Pueraria montana var. lobata (Kudzu vine).